Consider the following 565-residue polypeptide: Sulfite reductase [NADPH] hemoprotein beta-component (565 aa).

[4Fe-4S] cluster contacts are provided by Cys429, Cys435, Cys474, and Cys478. Cys478 is a binding site for siroheme.

This sequence belongs to the nitrite and sulfite reductase 4Fe-4S domain family. As to quaternary structure, alpha(8)-beta(8). The alpha component is a flavoprotein, the beta component is a hemoprotein. Siroheme serves as cofactor. It depends on [4Fe-4S] cluster as a cofactor.

The catalysed reaction is hydrogen sulfide + 3 NADP(+) + 3 H2O = sulfite + 3 NADPH + 4 H(+). Its pathway is sulfur metabolism; hydrogen sulfide biosynthesis; hydrogen sulfide from sulfite (NADPH route): step 1/1. Functionally, component of the sulfite reductase complex that catalyzes the 6-electron reduction of sulfite to sulfide. This is one of several activities required for the biosynthesis of L-cysteine from sulfate. This is Sulfite reductase [NADPH] hemoprotein beta-component from Shewanella putrefaciens (strain CN-32 / ATCC BAA-453).